The following is a 418-amino-acid chain: Tyrosine--tRNA ligase (418 aa).

Tyr-34 contacts L-tyrosine. Positions Pro-39–His-48 match the 'HIGH' region motif. Tyr-169 and Gln-173 together coordinate L-tyrosine. The 'KMSKS' region signature appears at Lys-229 to Ser-233. Lys-232 lines the ATP pocket. An S4 RNA-binding domain is found at His-352–Tyr-418.

This sequence belongs to the class-I aminoacyl-tRNA synthetase family. TyrS type 1 subfamily. Homodimer.

It localises to the cytoplasm. It carries out the reaction tRNA(Tyr) + L-tyrosine + ATP = L-tyrosyl-tRNA(Tyr) + AMP + diphosphate + H(+). Functionally, catalyzes the attachment of tyrosine to tRNA(Tyr) in a two-step reaction: tyrosine is first activated by ATP to form Tyr-AMP and then transferred to the acceptor end of tRNA(Tyr). The polypeptide is Tyrosine--tRNA ligase (Streptococcus mutans serotype c (strain ATCC 700610 / UA159)).